The chain runs to 533 residues: Phosphoenolpyruvate carboxykinase (ATP) (533 aa).

Residues Arg-59, Tyr-199, and Lys-205 each coordinate substrate. Residues Lys-205, His-224, and 240 to 248 each bind ATP; that span reads GLSGTGKTT. Mn(2+) contacts are provided by Lys-205 and His-224. Asp-261 is a Mn(2+) binding site. ATP is bound by residues Glu-289, Arg-325, 441-442, and Thr-447; that span reads RI. Arg-325 lines the substrate pocket.

It belongs to the phosphoenolpyruvate carboxykinase (ATP) family. Monomer. It depends on Mn(2+) as a cofactor.

It localises to the cytoplasm. It carries out the reaction oxaloacetate + ATP = phosphoenolpyruvate + ADP + CO2. It participates in carbohydrate biosynthesis; gluconeogenesis. In terms of biological role, involved in the gluconeogenesis. Catalyzes the conversion of oxaloacetate (OAA) to phosphoenolpyruvate (PEP) through direct phosphoryl transfer between the nucleoside triphosphate and OAA. This Idiomarina loihiensis (strain ATCC BAA-735 / DSM 15497 / L2-TR) protein is Phosphoenolpyruvate carboxykinase (ATP).